Reading from the N-terminus, the 292-residue chain is Elongation factor Ts (292 aa).

The segment at 82-85 (TDFV) is involved in Mg(2+) ion dislocation from EF-Tu.

Belongs to the EF-Ts family.

The protein resides in the cytoplasm. Associates with the EF-Tu.GDP complex and induces the exchange of GDP to GTP. It remains bound to the aminoacyl-tRNA.EF-Tu.GTP complex up to the GTP hydrolysis stage on the ribosome. This is Elongation factor Ts from Legionella pneumophila subsp. pneumophila (strain Philadelphia 1 / ATCC 33152 / DSM 7513).